The primary structure comprises 236 residues: SPbeta prophage-derived uncharacterized lipoprotein YokB (236 aa).

The signal sequence occupies residues 1 to 19 (MNIRFSMLVCVSFIFFTGG). A lipid anchor (N-palmitoyl cysteine) is attached at cysteine 20. Cysteine 20 is lipidated: S-diacylglycerol cysteine. Disordered regions lie at residues 23–59 (SSAN…TPNM) and 204–236 (VKKV…KDNK). The span at 31–53 (SKNKNESKEESSEEGVKENDNKL) shows a compositional bias: basic and acidic residues.

The protein localises to the cell membrane. The protein is SPbeta prophage-derived uncharacterized lipoprotein YokB (yokB) of Bacillus subtilis (strain 168).